Reading from the N-terminus, the 266-residue chain is NAD-capped RNA hydrolase NudC (266 aa).

Substrate is bound at residue arginine 74. Residues cysteine 103, cysteine 106, cysteine 121, and cysteine 124 each contribute to the Zn(2+) site. Tyrosine 129 is a substrate binding site. One can recognise a Nudix hydrolase domain in the interval 130-253 (PRVSPCIIVA…TIARVLIDET (124 aa)). 3 residues coordinate a divalent metal cation: alanine 163, glutamate 179, and glutamate 183. Residues 164–185 (GFVEAGETLEQCVAREVEEETG) carry the Nudix box motif. Residue 197–204 (QPWAFPSN) participates in substrate binding. Glutamate 224 serves as a coordination point for a divalent metal cation. Alanine 246 contributes to the substrate binding site.

It belongs to the Nudix hydrolase family. NudC subfamily. In terms of assembly, homodimer. Requires Mg(2+) as cofactor. The cofactor is Mn(2+). Zn(2+) serves as cofactor.

The catalysed reaction is a 5'-end NAD(+)-phospho-ribonucleoside in mRNA + H2O = a 5'-end phospho-adenosine-phospho-ribonucleoside in mRNA + beta-nicotinamide D-ribonucleotide + 2 H(+). It catalyses the reaction NAD(+) + H2O = beta-nicotinamide D-ribonucleotide + AMP + 2 H(+). The enzyme catalyses NADH + H2O = reduced beta-nicotinamide D-ribonucleotide + AMP + 2 H(+). Functionally, mRNA decapping enzyme that specifically removes the nicotinamide adenine dinucleotide (NAD) cap from a subset of mRNAs by hydrolyzing the diphosphate linkage to produce nicotinamide mononucleotide (NMN) and 5' monophosphate mRNA. The NAD-cap is present at the 5'-end of some mRNAs and stabilizes RNA against 5'-processing. Has preference for mRNAs with a 5'-end purine. Catalyzes the hydrolysis of a broad range of dinucleotide pyrophosphates. In Photobacterium profundum (strain SS9), this protein is NAD-capped RNA hydrolase NudC.